Reading from the N-terminus, the 494-residue chain is Serine/threonine-protein kinase PBL13 (494 aa).

A lipid anchor (S-palmitoyl cysteine) is attached at Cys-4. Residue Thr-65 is modified to Phosphothreonine. In terms of domain architecture, Protein kinase spans 76–356; it reads FSSSNFLGEG…STVVSVLQDI (281 aa). Residues 82–90 and Lys-111 contribute to the ATP site; that span reads LGEGGFGPV. Tyr-156 carries the post-translational modification Phosphotyrosine. The Proton acceptor role is filled by Asp-206. Position 210 is a phosphoserine (Ser-210). Position 240 is a phosphoserine; by autocatalysis (Ser-240). 2 positions are modified to phosphothreonine: Thr-241 and Thr-246. Tyr-254 carries the phosphotyrosine modification. Ser-321 is modified (phosphoserine; by autocatalysis). 2 positions are modified to phosphothreonine; by autocatalysis: Thr-323 and Thr-383. The residue at position 384 (Ser-384) is a Phosphoserine; by autocatalysis. Phosphothreonine; by autocatalysis occurs at positions 395, 398, 406, 413, 421, and 428. The residue at position 429 (Ser-429) is a Phosphoserine; by autocatalysis. The tract at residues 434-471 is disordered; the sequence is DKTRREVKETSLQNFDKPRNVSTTDNHQKFRSPAHTAR. At Thr-443 the chain carries Phosphothreonine; by autocatalysis. Over residues 443–458 the composition is skewed to polar residues; sequence TSLQNFDKPRNVSTTD. Phosphoserine; by autocatalysis occurs at positions 444 and 455. The residue at position 456 (Thr-456) is a Phosphothreonine; by autocatalysis. Positions 462–471 are enriched in basic residues; it reads KFRSPAHTAR. The residue at position 481 (Tyr-481) is a Phosphotyrosine; by autocatalysis.

It belongs to the protein kinase superfamily. Ser/Thr protein kinase family. Interacts with RBHOD. Interaction is disrupted by flagellin-induced immune signaling.

It is found in the cell membrane. The enzyme catalyses L-seryl-[protein] + ATP = O-phospho-L-seryl-[protein] + ADP + H(+). It catalyses the reaction L-threonyl-[protein] + ATP = O-phospho-L-threonyl-[protein] + ADP + H(+). Its function is as follows. Involved in defense responses. Acts as a negative regulator of plant immune responses. The protein is Serine/threonine-protein kinase PBL13 of Arabidopsis thaliana (Mouse-ear cress).